A 406-amino-acid chain; its full sequence is Arginine biosynthesis bifunctional protein ArgJ (406 aa).

Substrate contacts are provided by Thr156, Lys182, Thr193, Glu279, Asn401, and Thr406. The active-site Nucleophile is the Thr193.

It belongs to the ArgJ family. As to quaternary structure, heterotetramer of two alpha and two beta chains.

It is found in the cytoplasm. The enzyme catalyses N(2)-acetyl-L-ornithine + L-glutamate = N-acetyl-L-glutamate + L-ornithine. It carries out the reaction L-glutamate + acetyl-CoA = N-acetyl-L-glutamate + CoA + H(+). Its pathway is amino-acid biosynthesis; L-arginine biosynthesis; L-ornithine and N-acetyl-L-glutamate from L-glutamate and N(2)-acetyl-L-ornithine (cyclic): step 1/1. It functions in the pathway amino-acid biosynthesis; L-arginine biosynthesis; N(2)-acetyl-L-ornithine from L-glutamate: step 1/4. Functionally, catalyzes two activities which are involved in the cyclic version of arginine biosynthesis: the synthesis of N-acetylglutamate from glutamate and acetyl-CoA as the acetyl donor, and of ornithine by transacetylation between N(2)-acetylornithine and glutamate. This is Arginine biosynthesis bifunctional protein ArgJ from Bacillus licheniformis (strain ATCC 14580 / DSM 13 / JCM 2505 / CCUG 7422 / NBRC 12200 / NCIMB 9375 / NCTC 10341 / NRRL NRS-1264 / Gibson 46).